A 344-amino-acid polypeptide reads, in one-letter code: Photosystem II protein D1 (344 aa).

T2 carries the post-translational modification N-acetylthreonine. Residue T2 is modified to Phosphothreonine. 3 helical membrane-spanning segments follow: residues 29-46 (YIGWFGVLMFPLLLTATS), 118-133 (HFLLGVACYMGREWEL), and 142-156 (WIAVAYSAPVAAATA). H118 is a binding site for chlorophyll a. A pheophytin a-binding site is contributed by Y126. Residues D170 and E189 each contribute to the [CaMn4O5] cluster site. Residues 197-218 (FHMLGVAGVFGGSLFSAMHGSL) traverse the membrane as a helical segment. Chlorophyll a is bound at residue H198. Residues H215 and 264 to 265 (SF) each bind a quinone. Residue H215 coordinates Fe cation. H272 provides a ligand contact to Fe cation. Residues 274–288 (FLAAWPVVCIWFTAL) traverse the membrane as a helical segment. The [CaMn4O5] cluster site is built by H332, E333, D342, and A344.

It belongs to the reaction center PufL/M/PsbA/D family. PSII is composed of 1 copy each of membrane proteins PsbA, PsbB, PsbC, PsbD, PsbE, PsbF, PsbH, PsbI, PsbJ, PsbK, PsbL, PsbM, PsbT, PsbX, PsbY, PsbZ, Psb30/Ycf12, at least 3 peripheral proteins of the oxygen-evolving complex and a large number of cofactors. It forms dimeric complexes. The D1/D2 heterodimer binds P680, chlorophylls that are the primary electron donor of PSII, and subsequent electron acceptors. It shares a non-heme iron and each subunit binds pheophytin, quinone, additional chlorophylls, carotenoids and lipids. D1 provides most of the ligands for the Mn4-Ca-O5 cluster of the oxygen-evolving complex (OEC). There is also a Cl(-1) ion associated with D1 and D2, which is required for oxygen evolution. The PSII complex binds additional chlorophylls, carotenoids and specific lipids. serves as cofactor. Post-translationally, tyr-161 forms a radical intermediate that is referred to as redox-active TyrZ, YZ or Y-Z.

It localises to the plastid. It is found in the chloroplast thylakoid membrane. The catalysed reaction is 2 a plastoquinone + 4 hnu + 2 H2O = 2 a plastoquinol + O2. Its function is as follows. Photosystem II (PSII) is a light-driven water:plastoquinone oxidoreductase that uses light energy to abstract electrons from H(2)O, generating O(2) and a proton gradient subsequently used for ATP formation. It consists of a core antenna complex that captures photons, and an electron transfer chain that converts photonic excitation into a charge separation. The D1/D2 (PsbA/PsbD) reaction center heterodimer binds P680, the primary electron donor of PSII as well as several subsequent electron acceptors. In Staurastrum punctulatum (Green alga), this protein is Photosystem II protein D1.